The sequence spans 305 residues: N-acetylneuraminate lyase A (305 aa).

Positions 51 and 52 each coordinate aceneuramate. Tyr-143 (proton donor) is an active-site residue. Catalysis depends on Lys-173, which acts as the Schiff-base intermediate with substrate. Aceneuramate-binding residues include Ser-175, Gly-197, Asp-199, Glu-200, and Ser-216.

The protein belongs to the DapA family. NanA subfamily. As to quaternary structure, homotetramer.

Its subcellular location is the cytoplasm. It catalyses the reaction aceneuramate = aldehydo-N-acetyl-D-mannosamine + pyruvate. It functions in the pathway amino-sugar metabolism; N-acetylneuraminate degradation. Functionally, catalyzes the cleavage of N-acetylneuraminic acid (sialic acid) to form pyruvate and N-acetylmannosamine via a Schiff base intermediate. It prevents sialic acids from being recycled and returning to the cell surface. Involved in the N-glycolylneuraminic acid (Neu5Gc) degradation pathway. This is N-acetylneuraminate lyase A (npl-a) from Xenopus laevis (African clawed frog).